We begin with the raw amino-acid sequence, 621 residues long: Ubiquitin-like-specific protease 1 (621 aa).

Ser-2 carries the N-acetylserine modification. 2 positions are modified to phosphoserine: Ser-21 and Ser-25. 2 disordered regions span residues 116–150 (FDGS…ENYS) and 169–196 (RRRI…SNCD). Over residues 124–141 (SGNSDVESRSSGSRSSDV) the composition is skewed to low complexity. The residue at position 179 (Thr-179) is a Phosphothreonine. Polar residues predominate over residues 179 to 196 (TPSTSPISSLASQKSNCD). Residue Ser-264 is modified to Phosphoserine. The protease stretch occupies residues 432-621 (NIEITVRDFK…AHLILTDALK (190 aa)). Residues His-514, Asp-531, and Cys-580 contribute to the active site.

This sequence belongs to the peptidase C48 family.

It carries out the reaction Hydrolysis of the alpha-linked peptide bond in the sequence Gly-Gly-|-Ala-Thr-Tyr at the C-terminal end of the small ubiquitin-like modifier (SUMO) propeptide, Smt3, leading to the mature form of the protein. A second reaction involves the cleavage of an epsilon-linked peptide bond between the C-terminal glycine of the mature SUMO and the lysine epsilon-amino group of the target protein.. Protease that catalyzes two essential functions in the SUMO pathway: processing of full-length SMT3 to its mature form and deconjugation of SMT3 from targeted proteins. Has an essential role in the G2/M phase of the cell cycle. The protein is Ubiquitin-like-specific protease 1 (ULP1) of Saccharomyces cerevisiae (strain ATCC 204508 / S288c) (Baker's yeast).